We begin with the raw amino-acid sequence, 469 residues long: MSAANMPAGFTDYKVADISLAAWGRRETIIAESEMPALMGLRRKYLAEQPLKGAKILGCIHMTIQTAVLIETLVALGAEVRWSSCNIFSTQDQAAASIAAAGIPVFAWKGETEEEYEWCLEQTILKDGQPWDANMILDDGGDLTELLHKKYPQVLDRVHGVTEETTTGVHRLLDMLAKGELKVPAINVNDSVTKSKNDNKYGCRHSLNDAIKRGTDHLLSGKQALVIGYGDVGKGSAQSLRQEGMIVKVSEVDPICAMQACMDGFELVSPFIDGINDGTEASIDKALLGKIDLIVTTTGNVNVCDANMLKALKKRAVVCNIGHFDNEIDTAFMRKNWAWEEVKPQVHKVHRTGAGSFDPQNDDYLILLAEGRLVNLGNATGHPSRIMDGSFANQVLAQIFLFEQKFADLPAEKKAERLTVEVLPKKLDEEVALEMVRGFGGVVTQLTKQQADYIGVTVEGPFKPHAYRY.

Positions 63, 139, and 164 each coordinate substrate. 165–167 (TTT) contributes to the NAD(+) binding site. Residues K194 and D198 each coordinate substrate. Residues N199, 228–233 (GYGDVG), E251, N300, 321–323 (IGH), and N375 each bind NAD(+).

This sequence belongs to the adenosylhomocysteinase family. Requires NAD(+) as cofactor.

Its subcellular location is the cytoplasm. The enzyme catalyses S-adenosyl-L-homocysteine + H2O = L-homocysteine + adenosine. Its pathway is amino-acid biosynthesis; L-homocysteine biosynthesis; L-homocysteine from S-adenosyl-L-homocysteine: step 1/1. In terms of biological role, may play a key role in the regulation of the intracellular concentration of adenosylhomocysteine. The polypeptide is Adenosylhomocysteinase (Pseudomonas putida (strain ATCC 700007 / DSM 6899 / JCM 31910 / BCRC 17059 / LMG 24140 / F1)).